Here is a 191-residue protein sequence, read N- to C-terminus: Salivary lipocalin (191 aa).

A signal peptide spans 1–16 (MKLLLLLCLGLTLASS). Asparagine 69 is a glycosylation site (N-linked (GlcNAc...) asparagine). Residues cysteine 84 and cysteine 176 are joined by a disulfide bond.

It belongs to the calycin superfamily. Lipocalin family. Homodimer. As to expression, in the submaxillary salivary glands of mature male pigs, but absent from that of females. Expression was much lower in submaxillary glands of castrated male pigs than in sexually mature individuals.

It is found in the secreted. Functionally, binds pheromones, the pheromones are released from the saliva of males and affect the sexual behavior of females. This Sus scrofa (Pig) protein is Salivary lipocalin (SAL1).